The sequence spans 258 residues: Leucyl/phenylalanyl-tRNA--protein transferase (258 aa).

The tract at residues 199–220 (GGSDGPAPDQSIGMSSSGGVSD) is disordered. A compositionally biased stretch (low complexity) spans 209–220 (SIGMSSSGGVSD).

The protein belongs to the L/F-transferase family.

It is found in the cytoplasm. It catalyses the reaction N-terminal L-lysyl-[protein] + L-leucyl-tRNA(Leu) = N-terminal L-leucyl-L-lysyl-[protein] + tRNA(Leu) + H(+). The enzyme catalyses N-terminal L-arginyl-[protein] + L-leucyl-tRNA(Leu) = N-terminal L-leucyl-L-arginyl-[protein] + tRNA(Leu) + H(+). The catalysed reaction is L-phenylalanyl-tRNA(Phe) + an N-terminal L-alpha-aminoacyl-[protein] = an N-terminal L-phenylalanyl-L-alpha-aminoacyl-[protein] + tRNA(Phe). Functionally, functions in the N-end rule pathway of protein degradation where it conjugates Leu, Phe and, less efficiently, Met from aminoacyl-tRNAs to the N-termini of proteins containing an N-terminal arginine or lysine. The polypeptide is Leucyl/phenylalanyl-tRNA--protein transferase (Hyphomonas neptunium (strain ATCC 15444)).